Consider the following 217-residue polypeptide: Guanylate kinase (217 aa).

The Guanylate kinase-like domain occupies Gly15 to Leu194. Position 22-29 (Ser22–Thr29) interacts with ATP.

Belongs to the guanylate kinase family.

The protein localises to the cytoplasm. It catalyses the reaction GMP + ATP = GDP + ADP. Its function is as follows. Essential for recycling GMP and indirectly, cGMP. The chain is Guanylate kinase from Hyphomonas neptunium (strain ATCC 15444).